The sequence spans 401 residues: Chalcone synthase 5 (401 aa).

Cys168 is a catalytic residue.

Belongs to the thiolase-like superfamily. Chalcone/stilbene synthases family.

The catalysed reaction is (E)-4-coumaroyl-CoA + 3 malonyl-CoA + 3 H(+) = 2',4,4',6'-tetrahydroxychalcone + 3 CO2 + 4 CoA. Its pathway is secondary metabolite biosynthesis; flavonoid biosynthesis. Functionally, the primary product of this enzyme is 4,2',4',6'-tetrahydroxychalcone (also termed naringenin-chalcone or chalcone) which can under specific conditions spontaneously isomerize into naringenin. In Sorghum bicolor (Sorghum), this protein is Chalcone synthase 5 (CHS5).